Consider the following 197-residue polypeptide: LexA repressor (197 aa).

Residues 28–47 constitute a DNA-binding region (H-T-H motif); that stretch reads VREIARRFRITPRGALLHLI. Active-site for autocatalytic cleavage activity residues include S119 and K156.

It belongs to the peptidase S24 family. Homodimer.

It carries out the reaction Hydrolysis of Ala-|-Gly bond in repressor LexA.. Functionally, represses a number of genes involved in the response to DNA damage (SOS response), including recA and lexA. In the presence of single-stranded DNA, RecA interacts with LexA causing an autocatalytic cleavage which disrupts the DNA-binding part of LexA, leading to derepression of the SOS regulon and eventually DNA repair. The sequence is that of LexA repressor from Thermotoga petrophila (strain ATCC BAA-488 / DSM 13995 / JCM 10881 / RKU-1).